The chain runs to 197 residues: Protein Hikeshi (197 aa).

Residues 18–55 (VAEDKFVFDLPDYENINHVVVFMLGTVPFPEGMGGSVY) form a required for F-X-F-G repeats-nucleoporins recognition and nuclear import region. A flexible linker region involved in nuclear import of HSP70 proteins region spans residues 124–134 (QTPVGNAAVSS).

The protein belongs to the OPI10 family. Forms an asymmetric homodimer; required for binding and nuclear import of HSP70 proteins. Interacts with ATP-bound HSP70 proteins. Interacts with NUP62 and NUP153 (via F-X-F-G repeats). Interacts with HSPA8.

The protein localises to the cytoplasm. Its subcellular location is the cytosol. It is found in the nucleus. In terms of biological role, acts as a specific nuclear import carrier for HSP70 proteins following heat-shock stress: acts by mediating the nucleoporin-dependent translocation of ATP-bound HSP70 proteins into the nucleus. HSP70 proteins import is required to protect cells from heat shock damages. Does not translocate ADP-bound HSP70 proteins into the nucleus. The sequence is that of Protein Hikeshi from Bos taurus (Bovine).